A 478-amino-acid chain; its full sequence is Leukotoxin secretion protein D (478 aa).

Over 1 to 59 (MKIWLSGIYEFFLRYKNTWAEVWKIRKELDHPNRKKDESEFLPAHLDLIETPVSKKPRL) the chain is Cytoplasmic. The helical transmembrane segment at 60–80 (IAYLIMLFLVVAIVLASVSKV) threads the bilayer. Residues 81–478 (EIVATAPGKL…ESVTESLRER (398 aa)) are Periplasmic-facing.

The protein belongs to the membrane fusion protein (MFP) (TC 8.A.1) family.

It is found in the cell inner membrane. Functionally, involved in the transport of the Leukotoxin. This Mannheimia haemolytica (Pasteurella haemolytica) protein is Leukotoxin secretion protein D (lktD).